The sequence spans 118 residues: Large ribosomal subunit protein bL19 (118 aa).

The protein belongs to the bacterial ribosomal protein bL19 family.

This protein is located at the 30S-50S ribosomal subunit interface and may play a role in the structure and function of the aminoacyl-tRNA binding site. The chain is Large ribosomal subunit protein bL19 from Alcanivorax borkumensis (strain ATCC 700651 / DSM 11573 / NCIMB 13689 / SK2).